Consider the following 156-residue polypeptide: Transcription antitermination protein NusB (156 aa).

The protein belongs to the NusB family.

In terms of biological role, involved in transcription antitermination. Required for transcription of ribosomal RNA (rRNA) genes. Binds specifically to the boxA antiterminator sequence of the ribosomal RNA (rrn) operons. The protein is Transcription antitermination protein NusB of Rickettsia conorii (strain ATCC VR-613 / Malish 7).